Consider the following 946-residue polypeptide: Zinc finger protein rotund (946 aa).

Disordered regions lie at residues 10–30 and 156–269; these read GPQL…GHSD and FRKP…HNLN. A compositionally biased stretch (polar residues) spans 161–176; it reads NNNGYSWSTGNNNEVV. The span at 177–188 shows a compositional bias: low complexity; that stretch reads SHSSNGHTNNHP. Composition is skewed to polar residues over residues 198–230 and 242–269; these read ASAT…SIKS and TCKS…HNLN. C2H2-type zinc fingers lie at residues 488 to 510, 517 to 539, 545 to 567, 573 to 597, 603 to 625, and 634 to 656; these read YQCK…TQIH, YKCT…TRIH, YRCE…IRTH, YKCR…SRCH, FKCN…IPKH, and HICQ…MQKH. The interval 683–853 is disordered; the sequence is GGSANPANGP…TPSAVGPYDA (171 aa). Low complexity-rich tracts occupy residues 739-762 and 770-790; these read HQQQ…QQQQ and HGVP…QQQQ. Positions 813-822 are enriched in polar residues; the sequence is TAPNGSQSNG. The span at 828–841 shows a compositional bias: basic and acidic residues; the sequence is QPHHRMPDPVREDI.

The protein belongs to the krueppel C2H2-type zinc-finger protein family. As to quaternary structure, interacts with nab; which acts as a corepressor. As to expression, isoform rn and isoform roe are expressed in non-overlapping domains in the larval imaginal disks. Isoform rn is first expressed during the early third larval instar in the leg, wing, haltere and antennal part of the eye-antennal imaginal disk. It is observed as a ring in the leg and antenna disks and in the presumptive wing pouch and capitellum of wing and haltere disks respectively. In wing disk it is expressed in 3 concentric domains in the wing pouch. In late third instar, expression of isoform rn in the leg disk is no longer evident, but is maintained in the other disks. Isoform roe appears in the third instar and is confined to the eye part of the eye-antennal imaginal disk in a band of 4-6 cells at the morphogenetic furrow. There is no evidence of roe expression in other imaginal disks.

It localises to the nucleus. In terms of biological role, transcription factor involved in imaginal disks development. Isoform rn is required in the wings, antenna, haltere, proboscis and legs disks, while isoform roe is required in the eye disk. Together with nab corepressor, it is involved in the initiation and maintenance of wingless (wg) expression in the wing hinge, by limiting the expression of wg to this compartment. Also required for the epithelial-mesenchymal transition branch of basolateral junctions signaling. The polypeptide is Zinc finger protein rotund (Drosophila melanogaster (Fruit fly)).